The primary structure comprises 235 residues: MFQLGSLVVLCGLLIGNSESLLGELGSAVNNLKILNPPSEAVPQNLNLDVELLQQATSWPLAKNSILETLNTADLGNLKSFTSLNGLLLKINNLKVLDFQAKLSSNGNGIDLTVPLAGEASLVLPFIGKTVDISVSLDLINSLSIKTNAQTGLPEVTIGKCSSNTDKISISLLGRRLPIINSILDGVSTLLTSTLSTVLQNFLCPLLQYVLSTLNPSVLQGLLSNLLAGQVQLAL.

A signal peptide spans Met-1–Ser-20. Residues Cys-161 and Cys-204 are joined by a disulfide bond.

Belongs to the BPI/LBP/Plunc superfamily. Plunc family. In terms of tissue distribution, predominates in the parotid glands, present in smaller amounts (1/10) in the submaxillary glands and in the sublingual glands, and at lower amount in the pancreas but undetectable in the liver. Found also in lacrimal gland.

It is found in the secreted. Functionally, has strong antibacterial activity against P.aeruginosa. This is BPI fold-containing family A member 2 (Bpifa2) from Mus musculus (Mouse).